A 126-amino-acid polypeptide reads, in one-letter code: Histone H2B type 1-N (126 aa).

The segment covering 1 to 12 (MPEPSKSAPAPK) has biased composition (low complexity). Residues 1-36 (MPEPSKSAPAPKKGSKKAVTKAQKKDGKKRKRSRKE) form a disordered region. Proline 2 carries the N-acetylproline modification. Glutamate 3 carries the post-translational modification ADP-ribosyl glutamic acid. Lysine 6 bears the N6-(2-hydroxyisobutyryl)lysine; alternate mark. Lysine 6 carries the N6-(beta-hydroxybutyryl)lysine; alternate modification. Lysine 6 carries the N6-acetyllysine; alternate modification. The residue at position 6 (lysine 6) is an N6-butyryllysine; alternate. Lysine 6 carries the post-translational modification N6-crotonyllysine; alternate. The residue at position 6 (lysine 6) is an N6-lactoyllysine; alternate. A Glycyl lysine isopeptide (Lys-Gly) (interchain with G-Cter in SUMO2); alternate cross-link involves residue lysine 6. Serine 7 is subject to ADP-ribosylserine. Lysine 12 is subject to N6-(beta-hydroxybutyryl)lysine; alternate. N6-acetyllysine; alternate is present on residues lysine 12 and lysine 13. An N6-crotonyllysine; alternate mark is found at lysine 12 and lysine 13. Position 12 is an N6-lactoyllysine; alternate (lysine 12). At lysine 13 the chain carries N6-(2-hydroxyisobutyryl)lysine; alternate. Serine 15 is modified (phosphoserine; by STK4/MST1). Lysine 16, lysine 17, lysine 21, and lysine 24 each carry N6-acetyllysine; alternate. N6-crotonyllysine; alternate is present on residues lysine 16, lysine 17, lysine 21, and lysine 24. N6-lactoyllysine; alternate is present on residues lysine 16, lysine 17, lysine 21, and lysine 24. Lysine 17 is modified (N6-glutaryllysine; alternate). An N6-(2-hydroxyisobutyryl)lysine; alternate mark is found at lysine 21 and lysine 24. At lysine 21 the chain carries N6-(beta-hydroxybutyryl)lysine; alternate. Lysine 21 carries the N6-butyryllysine; alternate modification. Lysine 21 participates in a covalent cross-link: Glycyl lysine isopeptide (Lys-Gly) (interchain with G-Cter in SUMO2); alternate. The residue at position 25 (lysine 25) is an N6-(2-hydroxyisobutyryl)lysine. Position 35 is an N6-(2-hydroxyisobutyryl)lysine; alternate (lysine 35). Lysine 35 bears the N6-(beta-hydroxybutyryl)lysine; alternate mark. Lysine 35 carries the N6-crotonyllysine; alternate modification. Lysine 35 is subject to N6-glutaryllysine; alternate. Lysine 35 bears the N6-succinyllysine; alternate mark. Lysine 35 is covalently cross-linked (Glycyl lysine isopeptide (Lys-Gly) (interchain with G-Cter in ubiquitin); alternate). Glutamate 36 carries the post-translational modification PolyADP-ribosyl glutamic acid. Serine 37 carries the post-translational modification Phosphoserine; by AMPK. N6-(2-hydroxyisobutyryl)lysine; alternate occurs at positions 44, 47, and 58. Lysine 44 carries the post-translational modification N6-lactoyllysine; alternate. Residues lysine 44 and lysine 47 each carry the N6-glutaryllysine; alternate modification. Lysine 47 is subject to N6-methyllysine; alternate. At lysine 58 the chain carries N6,N6-dimethyllysine; alternate. At arginine 80 the chain carries Dimethylated arginine. Lysine 86 bears the N6-(2-hydroxyisobutyryl)lysine; alternate mark. An N6-acetyllysine; alternate modification is found at lysine 86. The residue at position 86 (lysine 86) is an N6-lactoyllysine; alternate. Lysine 86 is modified (N6,N6,N6-trimethyllysine; alternate). Omega-N-methylarginine occurs at positions 87 and 93. Position 109 is an N6-(2-hydroxyisobutyryl)lysine; alternate (lysine 109). At lysine 109 the chain carries N6-lactoyllysine; alternate. Lysine 109 carries the N6-glutaryllysine; alternate modification. At lysine 109 the chain carries N6-methyllysine; alternate. Serine 113 is a glycosylation site (O-linked (GlcNAc) serine). Threonine 116 carries the post-translational modification Phosphothreonine. Residues lysine 117 and lysine 121 each carry the N6-(2-hydroxyisobutyryl)lysine; alternate modification. N6-(beta-hydroxybutyryl)lysine; alternate is present on lysine 117. Residues lysine 117 and lysine 121 each carry the N6-lactoyllysine; alternate modification. N6-glutaryllysine; alternate occurs at positions 117 and 121. Residues lysine 117 and lysine 121 each carry the N6-succinyllysine; alternate modification. Lysine 117 carries the post-translational modification N6-methylated lysine; alternate. A Glycyl lysine isopeptide (Lys-Gly) (interchain with G-Cter in ubiquitin); alternate cross-link involves residue lysine 121.

It belongs to the histone H2B family. As to quaternary structure, the nucleosome is a histone octamer containing two molecules each of H2A, H2B, H3 and H4 assembled in one H3-H4 heterotetramer and two H2A-H2B heterodimers. The octamer wraps approximately 147 bp of DNA. Monoubiquitination at Lys-35 (H2BK34Ub) by the MSL1/MSL2 dimer is required for histone H3 'Lys-4' (H3K4me) and 'Lys-79' (H3K79me) methylation and transcription activation at specific gene loci, such as HOXA9 and MEIS1 loci. Similarly, monoubiquitination at Lys-121 (H2BK120Ub) by the RNF20/40 complex gives a specific tag for epigenetic transcriptional activation and is also prerequisite for histone H3 'Lys-4' and 'Lys-79' methylation. It also functions cooperatively with the FACT dimer to stimulate elongation by RNA polymerase II. H2BK120Ub also acts as a regulator of mRNA splicing: deubiquitination by USP49 is required for efficient cotranscriptional splicing of a large set of exons. Post-translationally, phosphorylated on Ser-15 (H2BS14ph) by STK4/MST1 during apoptosis; which facilitates apoptotic chromatin condensation. Also phosphorylated on Ser-15 in response to DNA double strand breaks (DSBs), and in correlation with somatic hypermutation and immunoglobulin class-switch recombination. Phosphorylation at Ser-37 (H2BS36ph) by AMPK in response to stress promotes transcription. In terms of processing, glcNAcylation at Ser-113 promotes monoubiquitination of Lys-121. It fluctuates in response to extracellular glucose, and associates with transcribed genes. ADP-ribosylated by PARP1 or PARP2 on Ser-7 (H2BS6ADPr) in response to DNA damage. H2BS6ADPr promotes recruitment of CHD1L. Mono-ADP-ribosylated on Glu-3 (H2BE2ADPr) by PARP3 in response to single-strand breaks. Poly ADP-ribosylation on Glu-36 (H2BE35ADPr) by PARP1 regulates adipogenesis: it inhibits phosphorylation at Ser-37 (H2BS36ph), thereby blocking expression of pro-adipogenetic genes. Post-translationally, crotonylation (Kcr) is specifically present in male germ cells and marks testis-specific genes in post-meiotic cells, including X-linked genes that escape sex chromosome inactivation in haploid cells. Crotonylation marks active promoters and enhancers and confers resistance to transcriptional repressors. It is also associated with post-meiotically activated genes on autosomes. In terms of processing, lactylated in macrophages by EP300/P300 by using lactoyl-CoA directly derived from endogenous or exogenous lactate, leading to stimulates gene transcription.

It is found in the nucleus. The protein resides in the chromosome. Functionally, core component of nucleosome. Nucleosomes wrap and compact DNA into chromatin, limiting DNA accessibility to the cellular machineries which require DNA as a template. Histones thereby play a central role in transcription regulation, DNA repair, DNA replication and chromosomal stability. DNA accessibility is regulated via a complex set of post-translational modifications of histones, also called histone code, and nucleosome remodeling. The protein is Histone H2B type 1-N (H2BC15) of Bos taurus (Bovine).